The following is a 2128-amino-acid chain: Spectrin beta chain, erythrocytic (2128 aa).

A compositionally biased stretch (polar residues) spans 1-15 (MTSATEFENVGNQPP). The disordered stretch occupies residues 1-30 (MTSATEFENVGNQPPFSRINARWDAPDDEL). An actin-binding region spans residues 2–275 (TSATEFENVG…IITYVVAFYH (274 aa)). S36 carries the phosphoserine modification. Calponin-homology (CH) domains follow at residues 54–158 (VVQK…LRFQ) and 173–278 (RSAK…HYFS). Phosphothreonine is present on T104. 17 Spectrin repeats span residues 303 to 411 (MIEK…LALR), 416 to 517 (RQEF…QRLE), 521 to 627 (ALQK…QLEQ), 630 to 733 (RLWK…DLQD), 736 to 838 (NFFQ…KLQE), 845 to 942 (VFGE…REAV), 950 to 1050 (NYCV…LSLG), 1054 to 1157 (KLQA…NTLT), 1162 to 1250 (FQEF…RHKK), 1267 to 1368 (ELQN…EQLS), 1381 to 1455 (ADLN…FLDL), 1473 to 1574 (LQIS…RLRD), 1576 to 1680 (HEAQ…RLEN), 1682 to 1784 (YHLF…MQLL), 1789 to 1890 (DLHR…RAQL), 1897 to 1997 (FRFF…DRLH), and 2004 to 2064 (QFSR…KPTT). Position 1289 is a phosphoserine (S1289). Phosphoserine is present on S2034. The segment at 2062–2108 (PTTLELKERQTPERPTEEPGPQEEEGETAGEAPQVHHAATERTSPVS) is disordered. T2064, T2072, and T2101 each carry phosphothreonine. Positions 2066–2078 (ELKERQTPERPTE) are enriched in basic and acidic residues. Residues S2105, S2108, S2114, S2116, and S2119 each carry the phosphoserine modification.

It belongs to the spectrin family. In terms of assembly, composed of nonhomologous chains, alpha and beta, which aggregate to form dimers, tetramers, and higher polymers. Interacts with BCAM.

Its subcellular location is the cytoplasm. It localises to the cytoskeleton. It is found in the cell cortex. Spectrin is the major constituent of the cytoskeletal network underlying the erythrocyte plasma membrane. It associates with band 4.1 and actin to form the cytoskeletal superstructure of the erythrocyte plasma membrane. This chain is Spectrin beta chain, erythrocytic (Sptb), found in Mus musculus (Mouse).